A 128-amino-acid chain; its full sequence is Translation initiation factor 5A (128 aa).

Lysine 35 is subject to Hypusine.

It belongs to the eIF-5A family.

It is found in the cytoplasm. Functionally, functions by promoting the formation of the first peptide bond. The protein is Translation initiation factor 5A of Methanosarcina barkeri (strain Fusaro / DSM 804).